Consider the following 242-residue polypeptide: Mannose-P-dolichol utilization defect 1 protein homolog (242 aa).

Positions 37 to 95 constitute a PQ-loop 1 domain; sequence LSRGLGFAITLGSILLFVPQILKIQAARSAQGISAASQLLALVGAIGTASYSYRSGFVF. Helical transmembrane passes span 40-60, 68-88, 98-118, 120-140, 148-168, 180-200, and 207-227; these read GLGF…ILKI, GISA…ASYS, WGDS…IFLF, GQTM…YGVV, TLTA…LLQI, LSLI…FTSV, and LLIV…AQFF. The PQ-loop 2 domain maps to 152-202; that stretch reads VQTAGIPIVVVSKLLQISQNYRAQSTGQLSLISVFLQFAGTLARVFTSVQD.

This sequence belongs to the MPDU1 (TC 2.A.43.3) family.

It is found in the membrane. This is Mannose-P-dolichol utilization defect 1 protein homolog from Caenorhabditis elegans.